A 483-amino-acid polypeptide reads, in one-letter code: Proline--tRNA ligase (483 aa).

The protein belongs to the class-II aminoacyl-tRNA synthetase family. ProS type 3 subfamily. Homodimer.

The protein localises to the cytoplasm. It carries out the reaction tRNA(Pro) + L-proline + ATP = L-prolyl-tRNA(Pro) + AMP + diphosphate. Its function is as follows. Catalyzes the attachment of proline to tRNA(Pro) in a two-step reaction: proline is first activated by ATP to form Pro-AMP and then transferred to the acceptor end of tRNA(Pro). The protein is Proline--tRNA ligase of Mycoplasma genitalium (strain ATCC 33530 / DSM 19775 / NCTC 10195 / G37) (Mycoplasmoides genitalium).